The following is a 412-amino-acid chain: Multifunctional CCA protein (412 aa).

Glycine 8 and arginine 11 together coordinate ATP. The CTP site is built by glycine 8 and arginine 11. Residues aspartate 21 and aspartate 23 each contribute to the Mg(2+) site. ATP is bound by residues arginine 91, arginine 137, and arginine 140. Arginine 91, arginine 137, and arginine 140 together coordinate CTP. An HD domain is found at threonine 228–tryptophan 329.

Belongs to the tRNA nucleotidyltransferase/poly(A) polymerase family. Bacterial CCA-adding enzyme type 1 subfamily. As to quaternary structure, monomer. Can also form homodimers and oligomers. Mg(2+) is required as a cofactor. Requires Ni(2+) as cofactor.

The catalysed reaction is a tRNA precursor + 2 CTP + ATP = a tRNA with a 3' CCA end + 3 diphosphate. The enzyme catalyses a tRNA with a 3' CCA end + 2 CTP + ATP = a tRNA with a 3' CCACCA end + 3 diphosphate. In terms of biological role, catalyzes the addition and repair of the essential 3'-terminal CCA sequence in tRNAs without using a nucleic acid template. Adds these three nucleotides in the order of C, C, and A to the tRNA nucleotide-73, using CTP and ATP as substrates and producing inorganic pyrophosphate. tRNA 3'-terminal CCA addition is required both for tRNA processing and repair. Also involved in tRNA surveillance by mediating tandem CCA addition to generate a CCACCA at the 3' terminus of unstable tRNAs. While stable tRNAs receive only 3'-terminal CCA, unstable tRNAs are marked with CCACCA and rapidly degraded. The sequence is that of Multifunctional CCA protein from Escherichia coli O157:H7.